The following is a 447-amino-acid chain: Phosphoglucosamine mutase (447 aa).

S100 acts as the Phosphoserine intermediate in catalysis. 4 residues coordinate Mg(2+): S100, D240, D242, and D244. S100 carries the post-translational modification Phosphoserine.

Belongs to the phosphohexose mutase family. Requires Mg(2+) as cofactor. Activated by phosphorylation.

The catalysed reaction is alpha-D-glucosamine 1-phosphate = D-glucosamine 6-phosphate. In terms of biological role, catalyzes the conversion of glucosamine-6-phosphate to glucosamine-1-phosphate. The sequence is that of Phosphoglucosamine mutase from Anoxybacillus flavithermus (strain DSM 21510 / WK1).